A 1839-amino-acid polypeptide reads, in one-letter code: MDTRFPFSPAEVSKVRVVQFGILSPDEIRQMSVIHVEHSETTEKGKPKVGGLSDTRLGTIDRKVKCETCMANMAECPGHFGYLELAKPMYHVGFMKTVLSIMRCVCFNCSKILADEEEHKFKQAMKIKNPKNRLKKILDACKNKTKCDGGDDIDDVQSHSTDEPVKKSRGGCGAQQPKLTIEGMKMIAEYKIQRKKNDEPDQLPEPAERKQTLGADRVLSVLKRISDADCQLLGFNPKFARPDWMILEVLPIPPPPVRPSVMMDATSRSEDDLTHQLAMIIRHNENLKRQEKNGAPAHIISEFTQLLQFHIATYFDNELPGQPRATQKSGRPIKSICSRLKAKEGRIRGNLMGKRVDFSARTVITPDPTINIDELGVPWSIALNLTYPETVTPYNIERLKELVDYGPHPPPGKTGAKYIIRDDGQRLDLRYLKKSSDQHLELGYKVERHLQDGDFVLFNRQPSLHKMSIMGHRIRIMPYSTFRLNLSVTSPYNADFDGDEMNMHVPQSFETRAEVLELMMVPKCIVSPQANRPVMGIVQDTLLGCRKITKRDTFIEKDVFMNTLMWWEDFDGKVPAPAILKPRPLWTGKQVFNLIIPKQINLLRYSAWHADTETGFITPGDTQVRIERGELLAGTLCKKTLGTSNGSLVHVIWEEVGPDAARKFLGHTQWLVNYWLLQNGFTIGIGDTIADSSTMEKINETISNAKTAVKDLIRQFQGKELDPEPGRTMRDTFENRVNQVLNKARDDAGSSAQKSLAETNNLKAMVTAGSKGSFINISQMTACVGQQNVEGKRIPFGFDGRTLPHFTKDDYGPESRGFVENSYLRGLTPQEFFFHAMGGREGLIDTAVKTSETGYIQRRLVKAMEDIMVKYDGTVRNSLGDVIQFLYGEDGMDAVWIESQKLDSLKMKKSEFDRTFKYEIDDENWNPTYLSDEHLEDLKGIRELRDVFDAEYSKLETDRFQLGTEIATNGDSTWPLPVNIKRHIWNAQKTFKIDLRKISDMHPVEIVDAVDKLQERLLVVPGDDALSVEAQKNATLFFNILLRSTLASKRVLEEYKLSREAFEWVIGEIESRFLQSLVAPGEMIGCVAAQSIGEPATQMTLNTFHYAGVSAKNVTLGVPRLREIINVAKRIKTPSLSVYLTPEASKSKEGAKTVQCALEYTTLRSVTQATEVWYDPDPMSTIIEEDFEFVRSYYEMPDEDVSPDKISPWLLRIELNREMMVDKKLSMADIAEKINLEFDDDLTCIFNDDNAQKLILRIRIMNDEGPKGELQDESAEDDVFLKKIESNMLTEMALRGIPDINKVFIKQVRKSRFDEEGGFKTSEEWMLDTEGVNLLAVMCHEDVDPKRTTSNHLIEIIEVLGIEAVRRALLDELRVVISFDGSYVNYRHLAILCDTMTYRGHLMAITRHGINRNDTGPLMRCSFEETVDILLDAAAYAETDCLRGVTENIMLGQLAPIGTGDCELYLNDEMLKNAIELQLPSYMDGLEFGMTPARSPVSGTPYHEGMMSPNYLLSPNMRLSPMSDAQFSPYVGGMAFSPSSSPGYSPSSPGYSPTSPGYSPTSPGYSPTSPGYSPTSPTYSPSSPGYSPTSPAYSPTSPSYSPTSPSYSPTSPSYSPTSPSYSPTSPSYSPTSPSYSPTSPAYSPTSPAYSPTSPAYSPTSPSYSPTSPSYSPTSPSYSPTSPSYSPTSPSYSPTSPAYSPTSPGYSPTSPSYSPTSPSYGPTSPSYNPQSAKYSPSIAYSPSNARLSPASPYSPTSPNYSPTSPSYSPTSPSYSPSSPTYSPSSPYSSGASPDYSPSAGYSPTLPGYSPSSTGQYTPHEGDKKDKTGKKDASKDDKGNP.

7 residues coordinate Zn(2+): C66, C69, C76, H79, C106, C109, and C147. Positions 152-174 (DIDDVQSHSTDEPVKKSRGGCGA) are disordered. Basic and acidic residues predominate over residues 156–166 (VQSHSTDEPVK). C172 serves as a coordination point for Zn(2+). Residues 326-397 (TQKSGRPIKS…PETVTPYNIE (72 aa)) mediate DNA binding. Mg(2+)-binding residues include D495, D497, and D499. The segment at 785–795 (GQQNVEGKRIP) is alpha-amanitin binding. Residues 829–841 (PQEFFFHAMGGRE) form a bridging helix region. A compositionally biased stretch (low complexity) spans 1538–1726 (PSSSPGYSPS…PSYGPTSPSY (189 aa)). The segment at 1538-1839 (PSSSPGYSPS…DASKDDKGNP (302 aa)) is disordered. 27 repeat units span residues 1544–1550 (YSPSSPG), 1551–1557 (YSPTSPG), 1558–1564 (YSPTSPG), 1565–1571 (YSPTSPG), 1572–1578 (YSPTSPT), 1579–1585 (YSPSSPG), 1586–1592 (YSPTSPA), 1593–1599 (YSPTSPS), 1600–1606 (YSPTSPS), 1607–1613 (YSPTSPS), 1614–1620 (YSPTSPS), 1621–1627 (YSPTSPS), 1628–1634 (YSPTSPS), 1635–1641 (YSPTSPA), 1642–1648 (YSPTSPA), 1649–1655 (YSPTSPA), 1656–1662 (YSPTSPS), 1663–1669 (YSPTSPS), 1670–1676 (YSPTSPS), 1677–1683 (YSPTSPS), 1684–1690 (YSPTSPS), 1691–1697 (YSPTSPA), 1698–1704 (YSPTSPG), 1705–1711 (YSPTSPS), 1712–1718 (YSPTSPS), 1719–1725 (YGPTSPS), and 1726–1732 (YNPQSAK). A C-terminal domain (CTD); 37 X 7 AA tandem approximate repeats of Y-[GNS]-P-[QST]-[LNS]-[APT]-[AGKNRSTY] region spans residues 1544-1813 (YSPSSPGYSP…LPGYSPSSTG (270 aa)). Residues 1727–1745 (NPQSAKYSPSIAYSPSNAR) are compositionally biased toward polar residues. The stretch at 1733 to 1738 (YSPSIA) is one 28; approximate repeat. 6 tandem repeats follow at residues 1739–1745 (YSPSNAR), 1752–1758 (YSPTSPN), 1759–1765 (YSPTSPS), 1766–1772 (YSPTSPS), 1773–1779 (YSPSSPT), and 1780–1786 (YSPSSPY). A compositionally biased stretch (low complexity) spans 1747–1798 (SPASPYSPTSPNYSPTSPSYSPTSPSYSPSSPTYSPSSPYSSGASPDYSPSA). A 35; approximate repeat occupies 1794–1799 (YSPSAG). 2 tandem repeats follow at residues 1800 to 1806 (YSPTLPG) and 1807 to 1813 (YSPSSTG). The segment covering 1818-1839 (HEGDKKDKTGKKDASKDDKGNP) has biased composition (basic and acidic residues).

It belongs to the RNA polymerase beta' chain family. As to quaternary structure, component of the RNA polymerase II (Pol II) complex consisting of at least 12 subunits. Interacts with RDM1. Interacts (via CTD) with PRP40A, PRP40B, PRP40C and CYP59. Interacts with MEE12/CCG1 and MEE14/CBP1. Binds (via CTD) to ATX1, especially when phosphorylated on 'Ser-5' of the heptapeptide repeat. Post-translationally, the tandem 7 residues repeats in the C-terminal domain (CTD) can be highly phosphorylated. The phosphorylation activates Pol II. Phosphorylation occurs mainly at residues 'Ser-2' and 'Ser-5' of the heptapeptide repeat. The phosphorylation state is believed to result from the balanced action of site-specific CTD kinases and phosphatase, and a 'CTD code' that specifies the position of Pol II within the transcription cycle has been proposed. ATX1 seems to regulate phosphorylation statment. 'Ser-2' and 'Ser-5' phosphorylation are repressed by flavopiridol (Flap) and seliciclib (Selic), inhibitors of CDK7 and CDK9.

It is found in the nucleus. The catalysed reaction is RNA(n) + a ribonucleoside 5'-triphosphate = RNA(n+1) + diphosphate. DNA-dependent RNA polymerase catalyzes the transcription of DNA into RNA using the four ribonucleoside triphosphates as substrates. Largest and catalytic component of RNA polymerase II which synthesizes mRNA precursors and many functional non-coding RNAs. Forms the polymerase active center together with the second largest subunit. Pol II is the central component of the basal RNA polymerase II transcription machinery. It is composed of mobile elements that move relative to each other. NRPB1 is part of the core element with the central large cleft, the clamp element that moves to open and close the cleft and the jaws that are thought to grab the incoming DNA template. At the start of transcription, a single-stranded DNA template strand of the promoter is positioned within the central active site cleft of Pol II. A bridging helix emanates from NRPB1 and crosses the cleft near the catalytic site and is thought to promote translocation of Pol II by acting as a ratchet that moves the RNA-DNA hybrid through the active site by switching from straight to bent conformations at each step of nucleotide addition. During transcription elongation, Pol II moves on the template as the transcript elongates. Elongation is influenced by the phosphorylation status of the C-terminal domain (CTD) of Pol II largest subunit (NRPB1), which serves as a platform for assembly of factors that regulate transcription initiation, elongation, termination and mRNA processing. In Arabidopsis thaliana (Mouse-ear cress), this protein is DNA-directed RNA polymerase II subunit RPB1.